The primary structure comprises 300 residues: Free fatty acid receptor 1 (300 aa).

Residues 1 to 8 (MDLPPQLS) are Extracellular-facing. A helical membrane pass occupies residues 9 to 31 (FALYVSAFALGFPLNLLAIRGAV). The Cytoplasmic segment spans residues 32–41 (SHAKLRLTPS). The chain crosses the membrane as a helical span at residues 42–64 (LVYTLHLGCSDLLLAITLPLKAV). Topologically, residues 65–79 (EALASGAWPLPLPFC) are extracellular. C79 and C170 are joined by a disulfide. The helical transmembrane segment at 80 to 101 (PVFALAHFAPLYAGGGFLAALS) threads the bilayer. Residues 102–121 (AGRYLGAAFPFGYQAIRRPR) are Cytoplasmic-facing. The chain crosses the membrane as a helical span at residues 122-142 (YSWGVCVAIWALVLCHLGLAL). At 143–178 (GLETSGSWLDNSTSSLGINIPVNGSPVCLEAWDPDS) the chain is on the extracellular side. N-linked (GlcNAc...) asparagine glycosylation occurs at N153. The helical transmembrane segment at 179 to 200 (ARPARLSFSILLFFLPLVITAF) threads the bilayer. At 201 to 223 (CYVGCLRALVRSGLSHKRKLRAA) the chain is on the cytoplasmic side. The chain crosses the membrane as a helical span at residues 224 to 248 (WVAGGALLTLLLCLGPYNASNVASF). Residues 249 to 256 (INPDLGGS) are Extracellular-facing. Residues 257–279 (WRKLGLITGAWSVVLNPLVTGYL) traverse the membrane as a helical segment. Residues 280 to 300 (GTGPGRGTICVTRTQRGTIQK) are Cytoplasmic-facing.

The protein belongs to the G-protein coupled receptor 1 family. Expressed in pancreatic islet beta cells (at protein level). Expressed in pancreatic islet beta cells.

It localises to the cell membrane. Is also activated by synthetic agonists, such as AM-8182, AM-6331 and TAK-875 (fasiglifam). AM-8182 is a full agonist, while AM-6331 and TAK-875 (fasiglifam) are partial agonists that potentiate the activity of the endogenous ligands, such as alpha-linolenic acid and gamma-linolenic acid. In terms of biological role, G-protein coupled receptor for medium and long chain saturated and unsaturated fatty acids that plays an important role in glucose homeostasis. Fatty acid binding increases glucose-stimulated insulin secretion, and may also enhance the secretion of glucagon-like peptide 1 (GLP-1). May also play a role in bone homeostasis; receptor signaling activates pathways that inhibit osteoclast differentiation. Ligand binding leads to a conformation change that triggers signaling via G-proteins that activate phospholipase C, leading to an increase of the intracellular calcium concentration. Seems to act through a G(q) and G(i)-mediated pathway. Mediates the anti-inflammatory effects of omega-3 polyunsaturated fatty acids (PUFAs) via inhibition of NLRP3 inflammasome activation. This chain is Free fatty acid receptor 1 (Ffar1), found in Mus musculus (Mouse).